A 193-amino-acid chain; its full sequence is UPF0301 protein SCO2948 (193 aa).

This sequence belongs to the UPF0301 (AlgH) family.

In Streptomyces coelicolor (strain ATCC BAA-471 / A3(2) / M145), this protein is UPF0301 protein SCO2948.